Reading from the N-terminus, the 488-residue chain is IQ domain-containing protein IQM1 (488 aa).

The tract at residues 20 to 46 (RTNSFKRDDTNRHQNSPKSTMERSLSF) is disordered. Residues 32 to 46 (HQNSPKSTMERSLSF) are compositionally biased toward polar residues. In terms of domain architecture, IQ spans 106–135 (LDAAATTLQKVYKSYRTRRNLADCAVVVEE). Disordered stretches follow at residues 377–403 (SFKS…EKEE) and 448–472 (SPRV…VRVS). Positions 388–403 (RKEVSEEVEIPSEKEE) are enriched in basic and acidic residues.

Interacts (via IQ domain) with CAM5. As to expression, highly expressed in leaf mesophyll cells. Expressed in roots, rosette and cauline leaves, stems, flowers and siliques.

The protein resides in the cytoplasm. It localises to the nucleus. Its function is as follows. Involved in the modulation of stomatal movement. Promotes stomatal opening. May play a role in the regulation of chitin signaling. May be involved in biotic and abiotic stress responses. This chain is IQ domain-containing protein IQM1, found in Arabidopsis thaliana (Mouse-ear cress).